The following is a 112-amino-acid chain: Small ribosomal subunit protein bS16 (112 aa).

It belongs to the bacterial ribosomal protein bS16 family.

This chain is Small ribosomal subunit protein bS16, found in Karelsulcia muelleri (strain GWSS) (Sulcia muelleri).